The primary structure comprises 5206 residues: Multifunctional-autoprocessing repeats-in-toxin (5206 aa).

The first 19 residues, 1 to 19 (MGKPFWRSVEYFFTGNYSA), serve as a signal peptide directing secretion. 39 RtxA repeats span residues 101–118 (GAAGGVSIDHLGNNGDVS), 121–138 (GAAAYNGITRKGLSGNVT), 141–157 (GAGGYNALWHETNQGNL), 161–184 (GAGAGNKLDRTWFNRYQGSRGDVT), 187–204 (GAGAANSISSRVETGNIT), 207–224 (GAGADNHLVRKGKVGDIT), 255–272 (GVGGYNSLYSDVAHGDIH), 275–291 (GGGAYNTITRKGSGSSF), 584–601 (GAGGGNVIKSNVTRGNVY), 604–620 (GGGIANVILHSSQFGNT), 624–641 (GGGAANVIVKSGEEGDLT), 644–658 (GAGLANVLVHQSKQG), 741–753 (AGGANVLTKVGDG), 759–771 (MLGGANVITHISG), 782–798 (ALGGANILTKKGKGNTL), 801–816 (MGGGANVLTHVGDGTT), 820–835 (MVGGANILTKVGNGDT), 841–855 (GVGNVLTHVGDGQTL), 858–875 (MGAAGNIFTKVGDGTSIA), 877–891 (MIGAGNIFTHVGEGN), 896–910 (MGGLGNVFTKVGNGD), 915–932 (MVAEANVFTHIGDGMSVA), 934–950 (MLAKGNVATKVGNGTTL), 972–984 (MIGQANIMTKVGN), 991–1006 (MVGKANIYTHVGDGTS), 1031–1043 (GKANIMTHVGDGL), 1067–1079 (AAAKANVVTHVGD), 1087–1102 (AGKGNILTKVGEGTTV), 1110–1122 (GNVMTHVGDGTTI), 1125–1142 (AKGKANIITKVGDGLGVN), 1145–1159 (WGQANVFTQVGDGDR), 1163–1179 (AKGEANIITKVGDGKEV), 1184–1199 (GKANIITHVGNGDDYT), 1201–1217 (AWGKANVITKVGNGRNV), 1220–1236 (AKGEANIVTQVGDGDSF), 1242–1256 (KGNIVTKVGDGMQVT), 1258–1275 (AKGKANITTTVGDGLSVT), 1296–1313 (AWGKYNINTKVGDGLNVA), and 1315–1332 (MKGKANANIHVGDGLNIN). Residues 1606 to 1626 (SQQANAVSEHATQNQASQNAL) are compositionally biased toward polar residues. Disordered regions lie at residues 1606–1682 (SQQA…ESEA) and 1738–1895 (IAAA…EQEA). The segment covering 1627-1646 (SDKERAEADRQRLEQEKQKQ) has biased composition (basic and acidic residues). A compositionally biased stretch (polar residues) spans 1652–1671 (GSQSQLESTDQQALGNNGQA). Residues 1778-1805 (AEAKADAETRKADAVAKSNDAKQAESDA) show a composition bias toward basic and acidic residues. Residues 1825-1834 (NKANQAQNDA) are compositionally biased toward polar residues. A compositionally biased stretch (basic and acidic residues) spans 1835–1849 (KGTKQNEGDRPDREG). The segment covering 1870–1880 (SHITTDSQTNA) has biased composition (polar residues). A membrane localization region (MLD) region spans residues 2377 to 2461 (ELMSVTELLD…SLLNQVNSRL (85 aa)). Positions 2537–2901 (EYGQVVADTI…HQVTDVLDAL (365 aa)) are rho inactivation domain (RID). The tract at residues 2998 to 3113 (VVLFLHGSGS…MPSMTKAITA (116 aa)) is ABH effector region. Residues 4111-4295 (PTADGGESRF…AENNKVSLSW (185 aa)) enclose the Peptidase C80 domain. 1D-myo-inositol hexakisphosphate is bound by residues 4117–4119 (ESR), 4144–4145 (KH), and arginine 4175. Histidine 4181 (for cysteine protease activity) is an active-site residue. A 1D-myo-inositol hexakisphosphate-binding site is contributed by serine 4226. The active-site Nucleophile; for cysteine protease activity is the cysteine 4230. 1D-myo-inositol hexakisphosphate-binding positions include 4259–4261 (SVR), 4272–4273 (RK), lysine 4285, and lysine 4290. 2 disordered regions span residues 4333–4362 (GAIGDNNDVFDAPEKRKAETETSSSSANNK) and 4738–4779 (LKEK…ETPD). Over residues 4750-4762 (SSVSVNGASVNSA) the composition is skewed to low complexity.

Mg(2+) serves as cofactor.

The protein localises to the secreted. The protein resides in the host cytoplasm. It localises to the host cytosol. Its subcellular location is the host cell membrane. The enzyme catalyses L-lysyl-/S-(2E,6E,10E)-geranylgeranyl-L-cysteinyl-[protein] + hexadecanoyl-CoA = N(6)-hexadecanoyl-L-lysyl-/S-(2E,6E,10E)-geranylgeranyl-L-cysteinyl-[protein] + CoA + H(+). It carries out the reaction L-lysyl-/S-(2E,6E,10E)-geranylgeranyl-L-cysteinyl-[protein] + dodecanoyl-CoA = N(6)-dodecanoyl-L-lysyl-/S-(2E,6E,10E)-geranylgeranyl-L-cysteinyl-[protein] + CoA + H(+). The catalysed reaction is L-lysyl-/S-(2E,6E,10E)-geranylgeranyl-L-cysteinyl-[protein] + decanoyl-CoA = N(6)-decanoyl-L-lysyl-/S-(2E,6E,10E)-geranylgeranyl-L-cysteinyl-[protein] + CoA + H(+). Precursor of a multifunctional toxin that causes destruction of the actin cytoskeleton by covalent cross-linking of actin and inactivation of Rho GTPases when translocated into the host cytoplasm. Upon translocation into the host cell, undergoes autoprocessing in cis mediated by the peptidase C80 domain (also named CPD domain): the protease activity is activated upon binding inositol hexakisphosphate (InsP6) present at the host cell membrane and delivers the Cysteine protease domain-containing toxin F3 chain to the host cytosol. The Cysteine protease domain-containing toxin F3 chain will then further cleave and release effector toxin chains that cause disassembly of the actin cytoskeleton and enhance V.vulnificus colonization of the small intestine, possibly by facilitating evasion of phagocytic cells. Functionally, following autocatalytic cleavage in cis, this chain mediates processing in trans to release other individual toxin chains to the host cytosol. Released effector toxin chains cause disassembly of the actin cytoskeleton and enhance V.vulnificus colonization of the small intestine, possibly by facilitating evasion of phagocytic cells. In terms of biological role, actin-directed toxin that catalyzes the covalent cross-linking of host cytoplasmic monomeric actin. Mediates the cross-link between 'Lys-50' of one monomer and 'Glu-270' of another actin monomer, resulting in formation of highly toxic actin oligomers that cause cell rounding. The toxin can be highly efficient at very low concentrations by acting on formin homology family proteins: toxic actin oligomers bind with high affinity to formins and adversely affect both nucleation and elongation abilities of formins, causing their potent inhibition in both profilin-dependent and independent manners. Acts as an acid--amino-acid ligase that transfers the gamma-phosphoryl group of ATP to the 'Glu-270' actin residue, resulting in the formation of an activated acyl phosphate intermediate. This intermediate is further hydrolyzed and the energy of hydrolysis is utilized for the formation of the amide bond between actin subunits. Its function is as follows. N-epsilon-fatty acyltransferase that mediates lysine-palmitoylation of host Rho GTPase proteins, with a strong preference for host Rac1. After delivery to the host cytosol, localizes to the host cell membrane where it palmitoylates host Rho GTPase proteins, resulting in loss of all active GTP-bound Rho and subsequent actin depolymerization. Prenylation of host Rac1 at the C-terminus is required for lysine-palmitoylation. Indirectly activates the small GTPase CDC42. This is Multifunctional-autoprocessing repeats-in-toxin from Vibrio vulnificus.